Reading from the N-terminus, the 399-residue chain is MSTRHDRIWVGIDAGKGHHWAVAVDADGETLFSTKVINDEAQVLTLIETAREREEVRWAVDISGRASTLLLALLVAHGQNVVYVPGRTVNRMSGAYKGEGKTDAKDARVIADQARMRRDFAPLDRPPELVTTLRLLTNHRADLIADRVRLINRLRDLLTGICPALERAFDYSAAKGPVVMLTEYQTPAALRRTGVKRLTTWLGRRKVRDADTVAAKAIEAARTQQVVLPGEKRATKLVCDLAHQLLALDERIKDNDREIRETFRTDDRAEIIESMPGMGPVLGAEFVAIVGDLSGYKDAGRLASHAGLAPVPRDSGRRTGNYHRPQRYNRRLRWLFYMSAQTAMMRPGPSRDYYLKKRGEGLLHTQALLSLARRRVDVLWAMLRDKRLFTPAPPVTQTA.

It belongs to the transposase IS1111A/IS1328/IS1533 family.

The polypeptide is Insertion element IS116 uncharacterized 44.8 kDa protein (Streptomyces clavuligerus).